Consider the following 386-residue polypeptide: Mannitol-1-phosphate 5-dehydrogenase (386 aa).

NAD(+) is bound at residue 4–15; that stretch reads AVHFGAGNIGRG.

It belongs to the mannitol dehydrogenase family.

The enzyme catalyses D-mannitol 1-phosphate + NAD(+) = beta-D-fructose 6-phosphate + NADH + H(+). This Oceanobacillus iheyensis (strain DSM 14371 / CIP 107618 / JCM 11309 / KCTC 3954 / HTE831) protein is Mannitol-1-phosphate 5-dehydrogenase.